An 890-amino-acid chain; its full sequence is DNA mismatch repair protein MutS (890 aa).

634–641 lines the ATP pocket; the sequence is GPNMGGKS.

This sequence belongs to the DNA mismatch repair MutS family.

Functionally, this protein is involved in the repair of mismatches in DNA. It is possible that it carries out the mismatch recognition step. This protein has a weak ATPase activity. In Burkholderia pseudomallei (strain K96243), this protein is DNA mismatch repair protein MutS.